The primary structure comprises 736 residues: Microtubule-associated protein mu-2 (736 aa).

The protein belongs to the orthoreovirus mu-2 protein family. In terms of assembly, interacts with protein mu-NS; in viral inclusions. Interacts with polymerase lambda-3; this interaction stimulates the ATPase activity of mu-2. Requires a divalent metal cation as cofactor.

Its subcellular location is the virion. The protein localises to the host cytoplasm. It localises to the host cytoskeleton. In terms of biological role, minor inner capsid (core) component. Displays NTPase and RNA 5'-triphosphatase (RTPase) activities. ATP is the preferred substrate for hydrolysis. May function as a cofactor of polymerase lambda-3. Associates with microtubules and plays a role in the formation, structural organization and morphology of viral inclusions, where the assembly of cores and the replication of viral RNA occur. Together with mu-NS, recruits the other core proteins to these inclusions. This is Microtubule-associated protein mu-2 (M1) from Mammalia (T1L).